The sequence spans 2492 residues: Polyketide synthase 19 (2492 aa).

A Ketosynthase family 3 (KS3) domain is found at 12–463 (REPIAIVGTS…GTNAHAIVES (452 aa)). Catalysis depends on for beta-ketoacyl synthase activity residues cysteine 202, histidine 341, and histidine 383. Positions 571–866 (VFTGQGAQWA…LEVGPHPALK (296 aa)) are malonyl-CoA:ACP transacylase (MAT) domain. Positions 967-1110 (HELLGRSVSH…GRIRLWLEQP (144 aa)) are N-terminal hotdog fold. The interval 967–1270 (HELLGRSVSH…GVQMTAIGKP (304 aa)) is dehydratase (DH) domain. Positions 967-1273 (HELLGRSVSH…MTAIGKPPDR (307 aa)) constitute a PKS/mFAS DH domain. The Proton acceptor; for dehydratase activity role is filled by histidine 1001. The interval 1125-1273 (MSELNMAQVY…MTAIGKPPDR (149 aa)) is C-terminal hotdog fold. Catalysis depends on aspartate 1183, which acts as the Proton donor; for dehydratase activity. The tract at residues 1431 to 1604 (LGAIVKQLGH…KTTGFSGVDI (174 aa)) is C-methyltransferase (CMeT) domain. The segment at 2118-2293 (SYLLFGMTGD…AGSIVHISVL (176 aa)) is ketoreductase (KR) domain. The Carrier domain occupies 2404 to 2479 (PILEKRFAQA…RVCDDVLVDW (76 aa)). Serine 2438 is modified (O-(pantetheine 4'-phosphoryl)serine).

Functionally, highly reducing polyketide synthase; part of the gene cluster that mediates the biosynthesis of fujikurins A-D, secondary metabolites playing a role during rice infection. The polyketide synthase PKS19 acts with the trans-enoyl reductase FFUJ_12240 and the polyketide transferase FFUJ_12241 to produce fujikurins, however, the biosynthesis pathway has not been identified yet. The protein is Polyketide synthase 19 of Gibberella fujikuroi (strain CBS 195.34 / IMI 58289 / NRRL A-6831) (Bakanae and foot rot disease fungus).